A 299-amino-acid polypeptide reads, in one-letter code: MAELGLNEHHQNEVINYMRFARSKRGLRLKTVDSCFQDLKESRLVEETFTVDEVSEVLNGLQAVVHSEVESELINTAYTNVLLLRQLFSQAEKWYLKLQTDISELENRELLEQVAEFEKAEFTSSNKKSIIDSMKPKLAPLHEGGAAELLNKEIIRLQEENEKLKSRLKTIESQATDALDEKSKLERALQDLQLEHGSQKDFIKAQDLSDLENTVAALKSEFQKTLNDQTENQKSLEENLATAKHDLLRVQEQLSMAEKELEKKFQQTAAFRNMKEILTKKNDQIKDLRKRLAKYEPED.

The stretch at 96–296 (LKLQTDISEL…DLRKRLAKYE (201 aa)) forms a coiled coil. Positions 145–299 (GAAELLNKEI…KRLAKYEPED (155 aa)) are interaction with BSS9.

Belongs to the LZTFL1 family. In terms of assembly, self-associates. Interacts with BBS9; the interaction mediates the association of LZTL1 with the BBsome complex and regulates BBSome ciliary trafficking.

It is found in the cytoplasm. Regulates ciliary localization of the BBSome complex. Together with the BBSome complex, controls SMO ciliary trafficking and contributes to the sonic hedgehog (SHH) pathway regulation. May play a role in neurite outgrowth. May have tumor suppressor function. This chain is Leucine zipper transcription factor-like protein 1 (LZTFL1), found in Bos taurus (Bovine).